A 323-amino-acid polypeptide reads, in one-letter code: Olfactory receptor 6T1 (323 aa).

Topologically, residues 1–25 (MNPENWTQVTSFVLLGFPSSHLIQF) are extracellular. Asn-5 carries N-linked (GlcNAc...) asparagine glycosylation. Residues 26–46 (LVFLGLMVTYIVTATGKLLII) form a helical membrane-spanning segment. Residues 47–54 (VLSWIDQR) are Cytoplasmic-facing. Residues 55 to 75 (LHIQMYFFLRNFSFLELLLVT) traverse the membrane as a helical segment. Over 76 to 99 (VVVPKMLVVILTGDHTISFVSCII) the chain is Extracellular. A disulfide bond links Cys-97 and Cys-189. A helical transmembrane segment spans residues 100–120 (QSYLYFFLGTTDFFLLAVMSL). Topologically, residues 121 to 139 (DRYLAICRPLRYETLMNGH) are cytoplasmic. The chain crosses the membrane as a helical span at residues 140 to 160 (VCSQLVLASWLAGFLWVLCPT). Residues 161-197 (VLMASLPFCGPNGIDHFFRDSWPLLRLSCGDTHLLKL) lie on the Extracellular side of the membrane. A helical transmembrane segment spans residues 198–217 (VAFMLSTLVLLGSLALTSVS). Over 218-237 (YACILATVLRAPTAAERRKA) the chain is Cytoplasmic. Residues 238-258 (FSTCASHLTVVVIIYGSSIFL) form a helical membrane-spanning segment. At 259–271 (YIRMSEAQSKLLN) the chain is on the extracellular side. Residues 272–292 (KGASVLSCIITPLLNPFIFTL) traverse the membrane as a helical segment. The Cytoplasmic segment spans residues 293–323 (RNDKVQQALREALGWPRLTAVMKLRVTSQRK).

It belongs to the G-protein coupled receptor 1 family.

The protein resides in the cell membrane. Functionally, odorant receptor. This is Olfactory receptor 6T1 (OR6T1) from Homo sapiens (Human).